The primary structure comprises 340 residues: COP9 signalosome complex subunit 5 (340 aa).

The 138-residue stretch at 52–189 (VRISATALIK…IGAFRTYPAD (138 aa)) folds into the MPN domain. Residues His-135, His-137, and Asp-148 each contribute to the Zn(2+) site. A JAMM motif motif is present at residues 135–148 (HSHPGYGCWLSGID).

This sequence belongs to the peptidase M67A family. CSN5 subfamily. Component of the COP9 signalosome (CSN) complex.

It is found in the cytoplasm. Its subcellular location is the nucleus. Its function is as follows. Catalytic Component of the COP9 signalosome (CSN) complex that acts as an regulator of the ubiquitin (Ubl) conjugation pathway by mediating the deneddylation of the cullin subunit of SCF-type E3 ubiquitin-protein ligase complexes. In Gibberella zeae (strain ATCC MYA-4620 / CBS 123657 / FGSC 9075 / NRRL 31084 / PH-1) (Wheat head blight fungus), this protein is COP9 signalosome complex subunit 5 (RRI1).